The chain runs to 185 residues: Elongation factor P (185 aa).

It belongs to the elongation factor P family.

Its subcellular location is the cytoplasm. Its pathway is protein biosynthesis; polypeptide chain elongation. In terms of biological role, involved in peptide bond synthesis. Stimulates efficient translation and peptide-bond synthesis on native or reconstituted 70S ribosomes in vitro. Probably functions indirectly by altering the affinity of the ribosome for aminoacyl-tRNA, thus increasing their reactivity as acceptors for peptidyl transferase. The polypeptide is Elongation factor P (Trichodesmium erythraeum (strain IMS101)).